We begin with the raw amino-acid sequence, 710 residues long: Tubulin polyglutamylase TTLL11 (710 aa).

The disordered stretch occupies residues 41-135; the sequence is VRVDAGAAGE…QRPVTVDSSK (95 aa). A compositionally biased stretch (basic and acidic residues) spans 51–60; sequence PECKAGEEQP. Positions 64–82 are enriched in low complexity; that stretch reads APAPAQPSAAEEGNTQVLQ. Residues 83–93 are compositionally biased toward pro residues; the sequence is RPPPTLPPSKP. Residues 123-135 are compositionally biased toward polar residues; the sequence is NGSQRPVTVDSSK. One can recognise a TTL domain in the interval 128–480; that stretch reads PVTVDSSKAR…EVKVAVIRDT (353 aa). ATP contacts are provided by residues K249, 255 to 256, 282 to 285, and 295 to 297; these read QG, QEYI, and KFD. Q255 is a binding site for a protein. Position 321 (R321) interacts with L-glutamate. ATP is bound at residue 343–344; the sequence is TN. The L-glutamate site is built by Y345, S346, and K365. Residues D428, E441, and N443 each coordinate Mg(2+). Residues 467-538 are c-MTBD region; sequence LVDEEVKVAV…SICLKQVFPK (72 aa). K473 provides a ligand contact to L-glutamate. Residues 665–710 are disordered; that stretch reads GVPSGGRPPHRGPPQEPSPSAQPAGDNPPPRTSCANKLSHPRHTLS.

Belongs to the tubulin--tyrosine ligase family. It depends on Mg(2+) as a cofactor.

The protein localises to the cytoplasm. Its subcellular location is the cytoskeleton. The protein resides in the cilium basal body. The catalysed reaction is L-glutamyl-[protein] + L-glutamate + ATP = gamma-L-glutamyl-L-glutamyl-[protein] + ADP + phosphate + H(+). The enzyme catalyses (L-glutamyl)(n)-gamma-L-glutamyl-L-glutamyl-[protein] + L-glutamate + ATP = (L-glutamyl)(n+1)-gamma-L-glutamyl-L-glutamyl-[protein] + ADP + phosphate + H(+). In terms of biological role, polyglutamylase which modifies tubulin, generating polyglutamate side chains of variable lengths on the gamma-carboxyl group of specific glutamate residues within the C-terminal tail of tubulin. Preferentially mediates ATP-dependent polyglutamate long side-chain elongation over the initiation step of the polyglutamylation reaction. Preferentially modifies the alpha-tubulin tail over a beta-tail. Required for CCSAP localization to both spindle and cilia microtubules. Promotes tubulin polyglutamylation which stimulates spastin/SPAST-mediated microtubule severing, thereby regulating microtubule functions. In Homo sapiens (Human), this protein is Tubulin polyglutamylase TTLL11.